The sequence spans 97 residues: Aspartyl/glutamyl-tRNA(Asn/Gln) amidotransferase subunit C (97 aa).

Belongs to the GatC family. In terms of assembly, heterotrimer of A, B and C subunits.

The enzyme catalyses L-glutamyl-tRNA(Gln) + L-glutamine + ATP + H2O = L-glutaminyl-tRNA(Gln) + L-glutamate + ADP + phosphate + H(+). The catalysed reaction is L-aspartyl-tRNA(Asn) + L-glutamine + ATP + H2O = L-asparaginyl-tRNA(Asn) + L-glutamate + ADP + phosphate + 2 H(+). In terms of biological role, allows the formation of correctly charged Asn-tRNA(Asn) or Gln-tRNA(Gln) through the transamidation of misacylated Asp-tRNA(Asn) or Glu-tRNA(Gln) in organisms which lack either or both of asparaginyl-tRNA or glutaminyl-tRNA synthetases. The reaction takes place in the presence of glutamine and ATP through an activated phospho-Asp-tRNA(Asn) or phospho-Glu-tRNA(Gln). This Synechococcus sp. (strain CC9605) protein is Aspartyl/glutamyl-tRNA(Asn/Gln) amidotransferase subunit C.